A 229-amino-acid chain; its full sequence is GTP cyclohydrolase 1 (229 aa).

The tract at residues 1–26 (MDAKIKPLRGGKPADARPEFQPAELD) is disordered. Positions 118, 121, and 189 each coordinate Zn(2+).

The protein belongs to the GTP cyclohydrolase I family. In terms of assembly, toroid-shaped homodecamer, composed of two pentamers of five dimers.

The catalysed reaction is GTP + H2O = 7,8-dihydroneopterin 3'-triphosphate + formate + H(+). The protein operates within cofactor biosynthesis; 7,8-dihydroneopterin triphosphate biosynthesis; 7,8-dihydroneopterin triphosphate from GTP: step 1/1. The polypeptide is GTP cyclohydrolase 1 (Rhodopseudomonas palustris (strain BisB5)).